A 188-amino-acid polypeptide reads, in one-letter code: FMN reductase (NADH) RutF (188 aa).

The protein belongs to the non-flavoprotein flavin reductase family. RutF subfamily.

It carries out the reaction FMNH2 + NAD(+) = FMN + NADH + 2 H(+). Functionally, catalyzes the reduction of FMN to FMNH2 which is used to reduce pyrimidine by RutA via the Rut pathway. The chain is FMN reductase (NADH) RutF from Acinetobacter baylyi (strain ATCC 33305 / BD413 / ADP1).